Here is a 507-residue protein sequence, read N- to C-terminus: Maturase K (507 aa).

Belongs to the intron maturase 2 family. MatK subfamily.

The protein localises to the plastid. Its subcellular location is the chloroplast. Usually encoded in the trnK tRNA gene intron. Probably assists in splicing its own and other chloroplast group II introns. The sequence is that of Maturase K from Persea americana (Avocado).